Here is a 360-residue protein sequence, read N- to C-terminus: Nucleoporin SEH1 (360 aa).

WD repeat units follow at residues 10-49 (DHKD…DWHC), 55-96 (THSG…SNDK), 111-152 (DSRT…NLSQ), 160-210 (SCKL…RKYA), 217-258 (TVTD…KELT), and 276-315 (NHNS…NWKC). Lys12 is covalently cross-linked (Glycyl lysine isopeptide (Lys-Gly) (interchain with G-Cter in SUMO2)). Residues Ser179 and Ser190 each carry the phosphoserine modification. A compositionally biased stretch (polar residues) spans 324–354 (SPVNGSSQQGTSNPSLGSNIPSLQNSLNGSS). The disordered stretch occupies residues 324-360 (SPVNGSSQQGTSNPSLGSNIPSLQNSLNGSSAGRKHS).

It belongs to the WD repeat SEC13 family. As to quaternary structure, component of the Nup107-160 subcomplex of the nuclear pore complex (NPC). The Nup107-160 subcomplex includes NUP160, NUP133, NUP107, NUP98, NUP85, NUP43, NUP37, SEH1 and SEC13. The SEH1 subunit appears to be only weakly associated with the Nup107-160 subcomplex. Component of the GATOR2 subcomplex, composed of MIOS, SEC13, SEH1L, WDR24 and WDR59. The GATOR2 complex interacts with CASTOR1 and CASTOR2; the interaction is negatively regulated by arginine. The GATOR2 complex interacts with SESN1, SESN2 and SESN3; the interaction is negatively regulated by amino acids. SESN1, SESN2 and SESN3 convey leucine availability via direct interaction with SEH1L and WDR24.

It localises to the chromosome. Its subcellular location is the centromere. The protein resides in the kinetochore. It is found in the nucleus. The protein localises to the nuclear pore complex. It localises to the lysosome membrane. With respect to regulation, the GATOR2 complex is negatively regulated by the upstream amino acid sensors CASTOR1 and SESN2, which sequester the GATOR2 complex in absence of amino acids. In the presence of abundant amino acids, GATOR2 is released from CASTOR1 and SESN2 and activated. Functionally, component of the Nup107-160 subcomplex of the nuclear pore complex (NPC). The Nup107-160 subcomplex is required for the assembly of a functional NPC. The Nup107-160 subcomplex is also required for normal kinetochore microtubule attachment, mitotic progression and chromosome segregation. This subunit plays a role in recruitment of the Nup107-160 subcomplex to the kinetochore. In terms of biological role, as a component of the GATOR2 complex, functions as an activator of the amino acid-sensing branch of the mTORC1 signaling pathway. The GATOR2 complex indirectly activates mTORC1 through the inhibition of the GATOR1 subcomplex. GATOR2 probably acts as an E3 ubiquitin-protein ligase toward GATOR1. In the presence of abundant amino acids, the GATOR2 complex mediates ubiquitination of the NPRL2 core component of the GATOR1 complex, leading to GATOR1 inactivation. In the absence of amino acids, GATOR2 is inhibited, activating the GATOR1 complex. Within the GATOR2 complex, SEC13 and SEH1L are required to stabilize the complex. This is Nucleoporin SEH1 (SEH1L) from Pongo abelii (Sumatran orangutan).